The chain runs to 87 residues: Small ribosomal subunit protein uS15c (87 aa).

The protein belongs to the universal ribosomal protein uS15 family. Part of the 30S ribosomal subunit.

It is found in the plastid. The protein resides in the chloroplast. In Oenothera argillicola (Appalachian evening primrose), this protein is Small ribosomal subunit protein uS15c (rps15).